The chain runs to 124 residues: Small ribosomal subunit protein uS12 (124 aa).

D89 carries the post-translational modification 3-methylthioaspartic acid.

The protein belongs to the universal ribosomal protein uS12 family. As to quaternary structure, part of the 30S ribosomal subunit. Contacts proteins S8 and S17. May interact with IF1 in the 30S initiation complex.

Functionally, with S4 and S5 plays an important role in translational accuracy. Interacts with and stabilizes bases of the 16S rRNA that are involved in tRNA selection in the A site and with the mRNA backbone. Located at the interface of the 30S and 50S subunits, it traverses the body of the 30S subunit contacting proteins on the other side and probably holding the rRNA structure together. The combined cluster of proteins S8, S12 and S17 appears to hold together the shoulder and platform of the 30S subunit. This chain is Small ribosomal subunit protein uS12, found in Psychrobacter sp. (strain PRwf-1).